Consider the following 254-residue polypeptide: Phosphatidylglycerophosphatase B (254 aa).

A helical membrane pass occupies residues 2-24 (RSIARRTAVGAALLLVMPVAVWI). The Periplasmic portion of the chain corresponds to 25–54 (SGWRWQPGEQSWLLKAAFWVTETVTQPWGV). A helical membrane pass occupies residues 55-66 (ITHLILFGWFLW). Over 67–71 (CLRFR) the chain is Cytoplasmic. Residues 72–94 (IKAAFVLFAILAAAILVGQGVKS) form a helical membrane-spanning segment. Residues 95 to 161 (WIKDKVQEPR…QKETGFAFPS (67 aa)) lie on the Periplasmic side of the membrane. Residues 97–105 (KDKVQEPRP) form a phosphatase sequence motif I region. A phosphatase sequence motif II region spans residues 160 to 163 (PSGH). Residues 162–176 (GHTMFAASWALLAVG) traverse the membrane as a helical segment. His163 (proton donor; for a subset of substrates) is an active-site residue. The Cytoplasmic portion of the chain corresponds to 177–182 (LLWPRR). Residues 183–202 (RTLTIAILLVWATGVMGSRL) form a helical membrane-spanning segment. Residues 200–211 (SRLLLGMHWPRD) form a phosphatase sequence motif III region. The Periplasmic portion of the chain corresponds to 203 to 208 (LLGMHW). His207 (nucleophile) is an active-site residue. The helical transmembrane segment at 209–232 (PRDLVVATLISWALVAVATWLAQR) threads the bilayer. At 233-254 (ICGPLTPPAEENREIAQREQES) the chain is on the cytoplasmic side.

Belongs to the PA-phosphatase related phosphoesterase family. The N-terminus is blocked.

The protein localises to the cell inner membrane. It localises to the cell outer membrane. It carries out the reaction a 1,2-diacyl-sn-glycero-3-phospho-(1'-sn-glycero-3'-phosphate) + H2O = a 1,2-diacyl-sn-glycero-3-phospho-(1'-sn-glycerol) + phosphate. The enzyme catalyses a 1,2-diacyl-sn-glycerol 3-diphosphate + H2O = a 1,2-diacyl-sn-glycero-3-phosphate + phosphate + H(+). It catalyses the reaction a 1,2-diacyl-sn-glycero-3-phosphate + H2O = a 1,2-diacyl-sn-glycerol + phosphate. The catalysed reaction is di-trans,octa-cis-undecaprenyl diphosphate + H2O = di-trans,octa-cis-undecaprenyl phosphate + phosphate + H(+). The protein operates within phospholipid metabolism; phosphatidylglycerol biosynthesis; phosphatidylglycerol from CDP-diacylglycerol: step 2/2. Catalyzes the dephosphorylation of diacylglycerol diphosphate (DGPP) to phosphatidate (PA) and the subsequent dephosphorylation of PA to diacylglycerol (DAG). Also has undecaprenyl pyrophosphate phosphatase activity, required for the biosynthesis of the lipid carrier undecaprenyl phosphate. Can also use lysophosphatidic acid (LPA) and phosphatidylglycerophosphate as substrates. The pattern of activities varies according to subcellular location, PGP phosphatase activity is higher in the cytoplasmic membrane, whereas PA and LPA phosphatase activities are higher in the outer membrane. Activity is independent of a divalent cation ion and insensitive to inhibition by N-ethylmaleimide. This chain is Phosphatidylglycerophosphatase B (pgpB), found in Escherichia coli O157:H7.